The sequence spans 365 residues: tRNA-specific 2-thiouridylase MnmA (365 aa).

Residues 12 to 19 and Met38 each bind ATP; that span reads AMSGGVDS. Residue Cys108 is the Nucleophile of the active site. Cys108 and Cys206 are joined by a disulfide. Residue Gly132 coordinates ATP. Residues 156 to 158 are interaction with tRNA; sequence KDQ. Cys206 acts as the Cysteine persulfide intermediate in catalysis. Residues 312–313 form an interaction with tRNA region; that stretch reads RY.

Belongs to the MnmA/TRMU family.

It localises to the cytoplasm. It carries out the reaction S-sulfanyl-L-cysteinyl-[protein] + uridine(34) in tRNA + AH2 + ATP = 2-thiouridine(34) in tRNA + L-cysteinyl-[protein] + A + AMP + diphosphate + H(+). Functionally, catalyzes the 2-thiolation of uridine at the wobble position (U34) of tRNA, leading to the formation of s(2)U34. In Carboxydothermus hydrogenoformans (strain ATCC BAA-161 / DSM 6008 / Z-2901), this protein is tRNA-specific 2-thiouridylase MnmA.